A 182-amino-acid polypeptide reads, in one-letter code: ATP-dependent protease subunit HslV (182 aa).

Residue threonine 2 is part of the active site. 3 residues coordinate Na(+): glycine 157, cysteine 160, and threonine 163.

It belongs to the peptidase T1B family. HslV subfamily. In terms of assembly, a double ring-shaped homohexamer of HslV is capped on each side by a ring-shaped HslU homohexamer. The assembly of the HslU/HslV complex is dependent on binding of ATP.

Its subcellular location is the cytoplasm. The catalysed reaction is ATP-dependent cleavage of peptide bonds with broad specificity.. Its activity is regulated as follows. Allosterically activated by HslU binding. Its function is as follows. Protease subunit of a proteasome-like degradation complex believed to be a general protein degrading machinery. The chain is ATP-dependent protease subunit HslV from Sodalis glossinidius (strain morsitans).